The chain runs to 362 residues: Neutral protease 2 homolog MEP2 (362 aa).

A signal peptide spans 1–19 (MLFPSIVAALAALANPVLS). Positions 20–177 (LTIPQATGSE…SKAINPISAR (158 aa)) are excised as a propeptide. Cystine bridges form between Cys-184-Cys-255 and Cys-262-Cys-280. Position 304 (His-304) interacts with Zn(2+). Glu-305 is a catalytic residue. Zn(2+) is bound by residues His-308 and Asp-319.

Belongs to the peptidase M35 family. Zn(2+) serves as cofactor.

The protein resides in the secreted. The catalysed reaction is Preferential cleavage of bonds with hydrophobic residues in P1'. Also 3-Asn-|-Gln-4 and 8-Gly-|-Ser-9 bonds in insulin B chain.. Functionally, secreted metalloproteinase that allows assimilation of proteinaceous substrates. Shows high activities on basic nuclear substrates such as histone and protamine. May be involved in virulence. The sequence is that of Neutral protease 2 homolog MEP2 (MEP2) from Coccidioides posadasii (strain C735) (Valley fever fungus).